We begin with the raw amino-acid sequence, 329 residues long: Sex comb on midleg-like protein 1 (329 aa).

Residues Ser138 and Ser238 each carry the phosphoserine modification. Residues Trp258–Lys325 enclose the SAM domain.

This sequence belongs to the SCM family.

The protein resides in the nucleus. In terms of biological role, putative Polycomb group (PcG) protein. PcG proteins act by forming multiprotein complexes, which are required to maintain the transcriptionally repressive state of homeotic genes throughout development. May be involved in spermatogenesis during sexual maturation. The polypeptide is Sex comb on midleg-like protein 1 (SCML1) (Hoolock hoolock (Western hoolock gibbon)).